Consider the following 95-residue polypeptide: Secretoglobin family 1C member 1 (95 aa).

A signal peptide spans 1–23; that stretch reads MKGSSALLLVALSLLCVCGLTRA.

The protein belongs to the secretoglobin family.

The protein localises to the secreted. The protein is Secretoglobin family 1C member 1 (Scgb1c1) of Mus musculus (Mouse).